The sequence spans 284 residues: RNase adapter protein RapZ (284 aa).

8–15 contributes to the ATP binding site; the sequence is GRSGSGKS. 56 to 59 serves as a coordination point for GTP; sequence DVRN. The interval 266–284 is RNA-binding; the sequence is RSRGKNVQSRHRTLEKRRS.

The protein belongs to the RapZ-like family. RapZ subfamily. In terms of assembly, homotrimer.

Modulates the synthesis of GlmS, by affecting the processing and stability of the regulatory small RNA GlmZ. When glucosamine-6-phosphate (GlcN6P) concentrations are high in the cell, RapZ binds GlmZ and targets it to cleavage by RNase E. Consequently, GlmZ is inactivated and unable to activate GlmS synthesis. Under low GlcN6P concentrations, RapZ is sequestered and inactivated by an other regulatory small RNA, GlmY, preventing GlmZ degradation and leading to synthesis of GlmS. The sequence is that of RNase adapter protein RapZ from Erwinia tasmaniensis (strain DSM 17950 / CFBP 7177 / CIP 109463 / NCPPB 4357 / Et1/99).